A 159-amino-acid chain; its full sequence is Phosphopantetheine adenylyltransferase (159 aa).

Residue Ser-9 coordinates substrate. Residues 9 to 10 and His-17 each bind ATP; that span reads SF. Substrate contacts are provided by Lys-41, Leu-73, and Lys-87. ATP contacts are provided by residues 88–90, Glu-98, and 122–128; these read GLR and YSFLSSS.

The protein belongs to the bacterial CoaD family. In terms of assembly, homohexamer. It depends on Mg(2+) as a cofactor.

The protein resides in the cytoplasm. The enzyme catalyses (R)-4'-phosphopantetheine + ATP + H(+) = 3'-dephospho-CoA + diphosphate. It participates in cofactor biosynthesis; coenzyme A biosynthesis; CoA from (R)-pantothenate: step 4/5. In terms of biological role, reversibly transfers an adenylyl group from ATP to 4'-phosphopantetheine, yielding dephospho-CoA (dPCoA) and pyrophosphate. This chain is Phosphopantetheine adenylyltransferase, found in Streptomyces coelicolor (strain ATCC BAA-471 / A3(2) / M145).